Here is a 994-residue protein sequence, read N- to C-terminus: Regulator of telomere elongation helicase 1 homolog (994 aa).

In terms of domain architecture, Helicase ATP-binding spans 7–316 (AGIPVHFPFE…DDLMLLKEML (310 aa)). 42 to 49 (SPTGTGKT) is a binding site for ATP. [4Fe-4S] cluster contacts are provided by C146, C164, C173, and C209. The DEAH box motif lies at 252–255 (DEAH). Residues 861 to 887 (SSGLVKIHKRERSSPPGSSQSSSQTAK) form a disordered region. Positions 874 to 884 (SPPGSSQSSSQ) are enriched in low complexity.

Belongs to the helicase family. RAD3/XPD subfamily.

It is found in the nucleus. The catalysed reaction is ATP + H2O = ADP + phosphate + H(+). Its function is as follows. A probable ATP-dependent DNA helicase implicated in DNA repair and the maintenance of genomic stability. Acts as an anti-recombinase to counteract toxic recombination and limit crossover during meiosis. Regulates meiotic recombination and crossover homeostasis by physically dissociating strand invasion events and thereby promotes noncrossover repair by meiotic synthesis dependent strand annealing (SDSA) as well as disassembly of D loop recombination intermediates. The protein is Regulator of telomere elongation helicase 1 homolog of Drosophila ananassae (Fruit fly).